A 565-amino-acid chain; its full sequence is MKSPAPSRPQKMALIPACIFLCFAALSVQAEETPVTPQPPDILLGPLFNDVQNAKLFPDQKTFADAVPNSDPLMILADYRMQQNQSGFDLRHFVNVNFTLPKEGEKYVPPEGQSLREHIDGLWPVLTRSTENTEKWDSLLPLPEPYVVPGGRFREVYYWDSYFTMLGLAESGHWDKVADMVANFAHEIDTYGHIPNGNRSYYLSRSQPPFFALMVELLAQHEGDAALKQYLPQMQKEYAYWMDGVENLQAGQQEKRVVKLQDGTLLNRYWDDRDTPRPESWVEDIATAKSNPNRPATEIYRDLRSAAASGWDFSSRWMDNQHQLNTLRTTSIVPVDLNSLMFKMEKILARASKAAGDNAMANQYETLANARQKGIEKYMWNDQQGWYADYDLKSHKVRNQLTAAALFPLYVNAAAKDRANKMATATKTHLLQPGGLNTTSVKSGQQWDAPNGWAPLQWVATEGLQNYGQKEVAMDISWHFLTNVQHTYDREKKLVEKYDVSTTGTGGGGGEYPLQDGFGWTNGVTLKMLDLICPKEQPCDNVPATRPTVKSATTQPSTKEAQPTP.

A signal peptide spans Met-1–Ala-30. Substrate contacts are provided by residues Arg-152, Trp-159 to Asp-160, Asn-196, Arg-205 to Gln-207, Arg-277 to Glu-279, and Gly-310. Catalysis depends on proton donor/acceptor residues Asp-312 and Glu-496. Glu-511 provides a ligand contact to substrate. Residues Pro-538–Pro-565 form a disordered region. The segment covering Thr-548–Pro-565 has biased composition (polar residues).

The protein belongs to the glycosyl hydrolase 37 family. In terms of assembly, monomer.

The protein resides in the periplasm. The enzyme catalyses alpha,alpha-trehalose + H2O = alpha-D-glucose + beta-D-glucose. Provides the cells with the ability to utilize trehalose at high osmolarity by splitting it into glucose molecules that can subsequently be taken up by the phosphotransferase-mediated uptake system. This is Periplasmic trehalase from Escherichia coli O8 (strain IAI1).